A 1059-amino-acid chain; its full sequence is Carbamoyl phosphate synthase large chain (1059 aa).

Positions 1–401 are carboxyphosphate synthetic domain; the sequence is MPKRSDIKKI…SLLKACRSLE (401 aa). ATP-binding residues include R129, R169, G175, G176, R208, I210, E215, G241, I242, H243, Q284, and E298. An ATP-grasp 1 domain is found at 133-327; sequence KQLMEELEQP…IAKLAAKIAV (195 aa). Mg(2+)-binding residues include Q284, E298, and N300. Q284, E298, and N300 together coordinate Mn(2+). Residues 402-546 are oligomerization domain; the sequence is IGVYHNEMSE…YSTYEWENES (145 aa). Positions 547–929 are carbamoyl phosphate synthetic domain; the sequence is IKSDKESVIV…ALYKAFEASY (383 aa). Residues 671 to 861 form the ATP-grasp 2 domain; it reads EQALKDLDIP…MAQVATNLIL (191 aa). Residues R707, S746, I748, E752, G777, V778, H779, S780, Q820, and E832 each contribute to the ATP site. 3 residues coordinate Mg(2+): Q820, E832, and N834. Positions 820, 832, and 834 each coordinate Mn(2+). The MGS-like domain occupies 930–1059; it reads LHLPTFGNVI…ESRSFTTEAI (130 aa). The tract at residues 930–1059 is allosteric domain; the sequence is LHLPTFGNVI…ESRSFTTEAI (130 aa).

The protein belongs to the CarB family. Composed of two chains; the small (or glutamine) chain promotes the hydrolysis of glutamine to ammonia, which is used by the large (or ammonia) chain to synthesize carbamoyl phosphate. Tetramer of heterodimers (alpha,beta)4. Requires Mg(2+) as cofactor. Mn(2+) is required as a cofactor.

The catalysed reaction is hydrogencarbonate + L-glutamine + 2 ATP + H2O = carbamoyl phosphate + L-glutamate + 2 ADP + phosphate + 2 H(+). The enzyme catalyses hydrogencarbonate + NH4(+) + 2 ATP = carbamoyl phosphate + 2 ADP + phosphate + 2 H(+). It functions in the pathway amino-acid biosynthesis; L-arginine biosynthesis; carbamoyl phosphate from bicarbonate: step 1/1. The protein operates within pyrimidine metabolism; UMP biosynthesis via de novo pathway; (S)-dihydroorotate from bicarbonate: step 1/3. Its function is as follows. Large subunit of the glutamine-dependent carbamoyl phosphate synthetase (CPSase). CPSase catalyzes the formation of carbamoyl phosphate from the ammonia moiety of glutamine, carbonate, and phosphate donated by ATP, constituting the first step of 2 biosynthetic pathways, one leading to arginine and/or urea and the other to pyrimidine nucleotides. The large subunit (synthetase) binds the substrates ammonia (free or transferred from glutamine from the small subunit), hydrogencarbonate and ATP and carries out an ATP-coupled ligase reaction, activating hydrogencarbonate by forming carboxy phosphate which reacts with ammonia to form carbamoyl phosphate. In Streptococcus thermophilus (strain ATCC BAA-250 / LMG 18311), this protein is Carbamoyl phosphate synthase large chain.